Reading from the N-terminus, the 369-residue chain is tRNA pseudouridine synthase D (369 aa).

D80 (nucleophile) is an active-site residue. The TRUD domain occupies 156 to 318 (GIPNWFGEQR…LKQERRALRL (163 aa)).

This sequence belongs to the pseudouridine synthase TruD family.

The catalysed reaction is uridine(13) in tRNA = pseudouridine(13) in tRNA. Its function is as follows. Responsible for synthesis of pseudouridine from uracil-13 in transfer RNAs. This chain is tRNA pseudouridine synthase D, found in Xanthomonas axonopodis pv. citri (strain 306).